A 118-amino-acid polypeptide reads, in one-letter code: NADH-quinone oxidoreductase subunit A (118 aa).

3 helical membrane-spanning segments follow: residues 5-25 (FAAVGIALVVAIAINLIMMLM), 61-81 (FLYALVFTAFDVETVFLFPWA), and 90-110 (FAFIEMFVFIVILLVGFWYAW).

It belongs to the complex I subunit 3 family. NDH-1 is composed of 14 different subunits. Subunits NuoA, H, J, K, L, M, N constitute the membrane sector of the complex.

Its subcellular location is the cell membrane. The catalysed reaction is a quinone + NADH + 5 H(+)(in) = a quinol + NAD(+) + 4 H(+)(out). NDH-1 shuttles electrons from NADH, via FMN and iron-sulfur (Fe-S) centers, to quinones in the respiratory chain. The immediate electron acceptor for the enzyme in this species is believed to be a menaquinone. Couples the redox reaction to proton translocation (for every two electrons transferred, four hydrogen ions are translocated across the cytoplasmic membrane), and thus conserves the redox energy in a proton gradient. The protein is NADH-quinone oxidoreductase subunit A of Desulfitobacterium hafniense (strain Y51).